A 590-amino-acid chain; its full sequence is MSRQSSVSFRSGGSRSFSTASAITPSVSRTSFTSVSRSGGGGGGGFGRVSLAGACGVGGYGSRSLYNLGGSKRISISTSGGSFRNRFGAGAGGGYGFGGGAGSGFGFGGGAGGGFGLGGGAGFGGGFGGPGFPVCPPGGIQEVTVNQSLLTPLNLQIDPSIQRVRTEEREQIKTLNNKFASFIDKVRFLEQQNKVLDTKWTLLQEQGTKTVRQNLEPLFEQYINNLRRQLDSIVGERGRLDSELRNMQDLVEDFKNKYEDEINKRTTAENEFVMLKKDVDAAYMNKVELEAKVDALMDEINFMKMFFDAELSQMQTHVSDTSVVLSMDNNRNLDLDSIIAEVKAQYEEIANRSRTEAESWYQTKYEELQQTAGRHGDDLRNTKHEISEMNRMIQRLRAEIDNVKKQCANLQNAIADAEQRGELALKDARNKLAELEEALQKAKQDMARLLREYQELMNTKLALDVEIATYRKLLEGEECRLSGEGVGPVNISVVTSSVSSGYGSGSGYGGGLGGGLGGGLGGGLAGGSSGSYYSSSSGGVGLGGGLSVGGSGFSASSGRGLGVGFGSGGGSSSSVKFVSTTSSSRKSFKS.

Positions M1–S18 are enriched in low complexity. Positions M1–A20 are disordered. The head stretch occupies residues M1–E167. Phosphoserine is present on residues S5, S8, S16, and S21. T24 carries the phosphothreonine; by CDK1 modification. 7 positions are modified to phosphoserine: S26, S36, S50, S64, S71, S75, and S82. T151 carries the phosphothreonine; by CDK1 modification. Positions E168–L203 are coil 1A. The IF rod domain occupies E168–L481. Positions Q204–Y222 are linker 1. Residues I223 to Q315 form a coil 1B region. The segment at T316–I338 is linker 12. The segment at I339 to E477 is coil 2. The interval E478 to S590 is tail. Residues G566–S590 are disordered. Residues S572 to S590 show a composition bias toward low complexity.

The protein belongs to the intermediate filament family. Heterodimer of a type I and a type II keratin. Heterodimer with type I keratin KRT25 leading to the formation of keratin intermediate filament (KIF) network. Forms a heterodimer (via 2B domains) with KRT14 (via 2B domains). Interacts with PLEC isoform 1C, when in a heterodimer with KRT14. Interacts with TCHP. Interacts with EPPK1. Interacts with AMELX. Interacts with PKP1 (via N-terminus) and PKP2. Phosphorylated by CDK1, AURKB and Rho-kinase, phosphorylation is regulated by the cell cycle. Thr-24 phosphorylation, mediated by CDK1, peaks during prometaphase or metaphase cells with phosphorylated filamentous structures evident throughout the cytoplasm during early mitosis. CDK1 phosphorylates Thr-24 in mitotic cells at the site of injury. Post-translationally, O-glycosylated. Expressed in corneal epithelium (at protein level). Expressed in keratinocytes (at protein level).

Its subcellular location is the cytoplasm. Functionally, required for the formation of keratin intermediate filaments in the basal epidermis and maintenance of the skin barrier in response to mechanical stress. Regulates the recruitment of Langerhans cells to the epidermis, potentially by modulation of the abundance of macrophage chemotactic cytokines, macrophage inflammatory cytokines and CTNND1 localization in keratinocytes. The protein is Keratin, type II cytoskeletal 5 (KRT5) of Homo sapiens (Human).